The chain runs to 179 residues: Acireductone dioxygenase (179 aa).

His97, His99, Glu103, and His141 together coordinate Fe(2+). Ni(2+)-binding residues include His97, His99, Glu103, and His141.

This sequence belongs to the acireductone dioxygenase (ARD) family. In terms of assembly, monomer. Requires Fe(2+) as cofactor. It depends on Ni(2+) as a cofactor.

It carries out the reaction 1,2-dihydroxy-5-(methylsulfanyl)pent-1-en-3-one + O2 = 3-(methylsulfanyl)propanoate + CO + formate + 2 H(+). The enzyme catalyses 1,2-dihydroxy-5-(methylsulfanyl)pent-1-en-3-one + O2 = 4-methylsulfanyl-2-oxobutanoate + formate + 2 H(+). It participates in amino-acid biosynthesis; L-methionine biosynthesis via salvage pathway; L-methionine from S-methyl-5-thio-alpha-D-ribose 1-phosphate: step 5/6. In terms of biological role, catalyzes 2 different reactions between oxygen and the acireductone 1,2-dihydroxy-3-keto-5-methylthiopentene (DHK-MTPene) depending upon the metal bound in the active site. Fe-containing acireductone dioxygenase (Fe-ARD) produces formate and 2-keto-4-methylthiobutyrate (KMTB), the alpha-ketoacid precursor of methionine in the methionine recycle pathway. Ni-containing acireductone dioxygenase (Ni-ARD) produces methylthiopropionate, carbon monoxide and formate, and does not lie on the methionine recycle pathway. The chain is Acireductone dioxygenase from Granulibacter bethesdensis (strain ATCC BAA-1260 / CGDNIH1).